A 190-amino-acid chain; its full sequence is ATP synthase subunit b 1 (190 aa).

Residues 35-55 (DFVVLLGFLLFLAILFYFGVP) traverse the membrane as a helical segment.

Belongs to the ATPase B chain family. In terms of assembly, F-type ATPases have 2 components, F(1) - the catalytic core - and F(0) - the membrane proton channel. F(1) has five subunits: alpha(3), beta(3), gamma(1), delta(1), epsilon(1). F(0) has three main subunits: a(1), b(2) and c(10-14). The alpha and beta chains form an alternating ring which encloses part of the gamma chain. F(1) is attached to F(0) by a central stalk formed by the gamma and epsilon chains, while a peripheral stalk is formed by the delta and b chains.

The protein resides in the cell inner membrane. In terms of biological role, f(1)F(0) ATP synthase produces ATP from ADP in the presence of a proton or sodium gradient. F-type ATPases consist of two structural domains, F(1) containing the extramembraneous catalytic core and F(0) containing the membrane proton channel, linked together by a central stalk and a peripheral stalk. During catalysis, ATP synthesis in the catalytic domain of F(1) is coupled via a rotary mechanism of the central stalk subunits to proton translocation. Functionally, component of the F(0) channel, it forms part of the peripheral stalk, linking F(1) to F(0). The sequence is that of ATP synthase subunit b 1 from Jannaschia sp. (strain CCS1).